The sequence spans 158 residues: Low molecular weight phosphotyrosine protein phosphatase (158 aa).

Alanine 2 is subject to N-acetylalanine. Cysteine 13 functions as the Nucleophile in the catalytic mechanism. Arginine 19 is an active-site residue. The Proton donor role is filled by aspartate 130. Phosphotyrosine occurs at positions 132 and 133.

Belongs to the low molecular weight phosphotyrosine protein phosphatase family. In terms of assembly, interacts with EPHA2; dephosphorylates EPHA2. Interacts with EPHB1. As to quaternary structure, interacts with the SH3 domain of SPTAN1. There is no interaction observed for isoform 2. Post-translationally, phosphorylated by LCK. Phosphorylation at Tyr-132 increases its phosphatase activity.

The protein localises to the cytoplasm. It catalyses the reaction O-phospho-L-tyrosyl-[protein] + H2O = L-tyrosyl-[protein] + phosphate. It carries out the reaction a phosphate monoester + H2O = an alcohol + phosphate. With respect to regulation, inhibited by sulfhydryl reagents. Its function is as follows. Acts on tyrosine phosphorylated proteins, low-MW aryl phosphates and natural and synthetic acyl phosphates with differences in substrate specificity between isoform 1 and isoform 2. The protein is Low molecular weight phosphotyrosine protein phosphatase of Rattus norvegicus (Rat).